Reading from the N-terminus, the 128-residue chain is UPF0325 protein YaeH (128 aa).

The protein belongs to the UPF0325 family.

The chain is UPF0325 protein YaeH from Shigella boydii serotype 18 (strain CDC 3083-94 / BS512).